A 1045-amino-acid polypeptide reads, in one-letter code: MILNKRLKLAYCVFLGCYGLSIHSSLAAYQDPGRLGAPDSWKTAEFNRQWGLEAISAEFAYARGYTGKGITIGVIDNAILSHSEFSGKLTRLDNGSYNFSYDKQDNMSFGDHGTHVAGIAAAKRDGAGMHGVAFDADIIGTKLNDYGNRNGREELIQSAARVINNSWGIAPDIRRDAKGDIIWLPNGRPDYVAFVKSEVIAEMMRSKSSVEWGSEQPVPTGGHSAMSTLLRAARHGKLIVFSAGNYNNYNIPEAQKSLPYAFPDVLNNYLIVTNLSDENQLSVSSTSCGQTASYCVSAPGSDIYSTVGRLESNTGGAVNREAYNKGELSLNPGYGNKSGTSMAAPHVTGVAAVLMQRFPYMSADQISAVIKTTATDLGVAGIDNLFGWGRVNLRDAINGPKMFITKEDIPQEYYVPGSYSEKQFVVNIPGLGNIVEPGTPVERRCTSSECSFDSWSNDISGHGGLTKTGAGTLALLGNNTYRGDTWVKQGVLAIDGSVASNVYIENSGTLSGEGTVGAFRAARSGSVAPGNGIGTLHVLHDAIFDRGSQYNVEVADNGRSDKIAARRAFLNGGSVNVSLERSQNLLSQNEAQSLLGNKYTILTTTDGVTGRFENANPSYPFVKVALDYRGNDVGLGITRTDASFDSLASTENEKAVARAVETLNATEPVTETAKRSVAIPAAEEANLLQSDGGEAQAVNEEASIVAGHPIYESFLGFTSARELQQATRQLSGQIHADMASAQINESRYLRDTATERLRQAEGRRTATDIKADDNGAWAKLLGSWGHASGNDNATGYQTSTYGVLLGLDSELFGDGRLGMMTGYTRTSLDGGYQSDAHSDNYHLGLYGDKRFGALALRAGGTYTWHRIDTSRSVNYGAQSDREKAKYNARTGQLFIESGYDWTSDAVNLEPFANLAYTHYRNEEINEQGGAAALRGDKQSQSATASTLGLRADTEWQTDSVAIALRGELGWQHQYGKLERKTQLMFKRTDAAFDVNSVPVSRDGAILKAGVDVSINKNAVLSLGYGGQLSSNHQDNSVNAGLTWRF.

Positions 1 to 27 are cleaved as a signal peptide; it reads MILNKRLKLAYCVFLGCYGLSIHSSLA. The Peptidase S8 domain occupies 49-397; that stretch reads QWGLEAISAE…WGRVNLRDAI (349 aa). Catalysis depends on charge relay system residues Asp-76, His-112, and Ser-341. A propeptide spans 646 to 1045 (translocator domain; removed in mature form); the sequence is SLASTENEKA…SVNAGLTWRF (400 aa). An Autotransporter domain is found at 769 to 1045; sequence IKADDNGAWA…SVNAGLTWRF (277 aa).

Belongs to the peptidase S8 family.

The protein resides in the secreted. This Serratia marcescens protein is Extracellular serine protease.